Here is a 478-residue protein sequence, read N- to C-terminus: Sodium-dependent phosphate transport protein 3 (478 aa).

Asn28, Asn47, Asn56, and Asn69 each carry an N-linked (GlcNAc...) asparagine glycan. The next 10 membrane-spanning stretches (helical) occupy residues 98–118 (ISYG…IFGA), 130–150 (SLLT…VIVI), 183–203 (SIAG…GGLI), 211–231 (FIFY…FTVI), 273–293 (LPLW…TIII), 317–337 (LPFI…DFLL), 341–361 (LLSL…LPSL), 363–383 (AVAL…LILI), 405–425 (YASF…IISS), and 442–462 (NVFF…LIFG).

This sequence belongs to the major facilitator superfamily. Sodium/anion cotransporter family. Expressed in the liver, kidney, placenta, lung and thyroid (at protein level).

The protein localises to the apical cell membrane. The catalysed reaction is 3 Na(+)(out) + phosphate(out) = 3 Na(+)(in) + phosphate(in). The enzyme catalyses urate(out) + n chloride(in) = urate(in) + n chloride(out). Its function is as follows. Acts as a membrane potential-dependent organic anion transporter, the transport requires a low concentration of chloride ions. Mediates chloride-dependent transport of urate. Can actively transport inorganic phosphate into cells via Na(+) cotransport. The polypeptide is Sodium-dependent phosphate transport protein 3 (Slc17a2) (Mus musculus (Mouse)).